A 458-amino-acid polypeptide reads, in one-letter code: Acetyl-CoA decarbonylase/synthase complex subunit gamma (458 aa).

The 59-residue stretch at 1-59 (MQVTAMDVYRLLPKTNCGKCNEASCMAFATKLIEKEVTLDDCPQLSGDERQKLENLLAP) folds into the 4Fe-4S domain. Cys17, Cys20, Cys25, and Cys42 together coordinate [4Fe-4S] cluster.

As to quaternary structure, heterodimer of delta and gamma chains. The ACDS complex is made up of alpha, epsilon, beta, gamma and delta chains with a probable stoichiometry of (alpha(2)epsilon(2))(4)-beta(8)-(gamma(1)delta(1))(8). Corrinoid is required as a cofactor. The cofactor is [4Fe-4S] cluster.

The enzyme catalyses 5,6,7,8-tetrahydrosarcinapterin + methyl-Co(III)-[corrinoid Fe-S protein] = 5-methyltetrahydrosarcinapterin + Co(I)-[corrinoid Fe-S protein] + H(+). In terms of biological role, part of a complex that catalyzes the reversible cleavage of acetyl-CoA, allowing autotrophic growth from CO(2). The polypeptide is Acetyl-CoA decarbonylase/synthase complex subunit gamma (Methanothermobacter thermautotrophicus (strain ATCC 29096 / DSM 1053 / JCM 10044 / NBRC 100330 / Delta H) (Methanobacterium thermoautotrophicum)).